A 103-amino-acid chain; its full sequence is Enhancer of rudimentary homolog (103 aa).

The protein belongs to the E(R) family. As to quaternary structure, homodimer.

May have a role in the cell cycle. This is Enhancer of rudimentary homolog from Aedes aegypti (Yellowfever mosquito).